A 393-amino-acid chain; its full sequence is CCA-adding enzyme (393 aa).

ATP-binding residues include Gly-27 and Arg-30. Residues Gly-27 and Arg-30 each coordinate CTP. Asp-40 and Asp-42 together coordinate Mg(2+). Arg-111, Asp-154, Arg-157, Arg-160, and Arg-163 together coordinate ATP. Residues Arg-111, Asp-154, Arg-157, Arg-160, and Arg-163 each coordinate CTP.

It belongs to the tRNA nucleotidyltransferase/poly(A) polymerase family. Bacterial CCA-adding enzyme type 3 subfamily. In terms of assembly, homodimer. Mg(2+) serves as cofactor.

The enzyme catalyses a tRNA precursor + 2 CTP + ATP = a tRNA with a 3' CCA end + 3 diphosphate. It carries out the reaction a tRNA with a 3' CCA end + 2 CTP + ATP = a tRNA with a 3' CCACCA end + 3 diphosphate. In terms of biological role, catalyzes the addition and repair of the essential 3'-terminal CCA sequence in tRNAs without using a nucleic acid template. Adds these three nucleotides in the order of C, C, and A to the tRNA nucleotide-73, using CTP and ATP as substrates and producing inorganic pyrophosphate. tRNA 3'-terminal CCA addition is required both for tRNA processing and repair. Also involved in tRNA surveillance by mediating tandem CCA addition to generate a CCACCA at the 3' terminus of unstable tRNAs. While stable tRNAs receive only 3'-terminal CCA, unstable tRNAs are marked with CCACCA and rapidly degraded. The protein is CCA-adding enzyme of Listeria innocua serovar 6a (strain ATCC BAA-680 / CLIP 11262).